The sequence spans 355 residues: UDP-N-acetylglucosamine--N-acetylmuramyl-(pentapeptide) pyrophosphoryl-undecaprenol N-acetylglucosamine transferase (355 aa).

UDP-N-acetyl-alpha-D-glucosamine-binding positions include 15–17 (TGG), N127, R163, S191, I244, 263–268 (ALTVSE), and Q288.

It belongs to the glycosyltransferase 28 family. MurG subfamily.

It localises to the cell inner membrane. It carries out the reaction di-trans,octa-cis-undecaprenyl diphospho-N-acetyl-alpha-D-muramoyl-L-alanyl-D-glutamyl-meso-2,6-diaminopimeloyl-D-alanyl-D-alanine + UDP-N-acetyl-alpha-D-glucosamine = di-trans,octa-cis-undecaprenyl diphospho-[N-acetyl-alpha-D-glucosaminyl-(1-&gt;4)]-N-acetyl-alpha-D-muramoyl-L-alanyl-D-glutamyl-meso-2,6-diaminopimeloyl-D-alanyl-D-alanine + UDP + H(+). Its pathway is cell wall biogenesis; peptidoglycan biosynthesis. Cell wall formation. Catalyzes the transfer of a GlcNAc subunit on undecaprenyl-pyrophosphoryl-MurNAc-pentapeptide (lipid intermediate I) to form undecaprenyl-pyrophosphoryl-MurNAc-(pentapeptide)GlcNAc (lipid intermediate II). This chain is UDP-N-acetylglucosamine--N-acetylmuramyl-(pentapeptide) pyrophosphoryl-undecaprenol N-acetylglucosamine transferase, found in Shigella flexneri serotype 5b (strain 8401).